We begin with the raw amino-acid sequence, 144 residues long: Small ribosomal subunit protein bS6 (144 aa).

Residues 95–144 (PVTTPSPMMQDDKSKPDENSRGTAAPTVNVADDSASGAQVVAAEENDTQS) are disordered. The span at 104–114 (QDDKSKPDENS) shows a compositional bias: basic and acidic residues.

This sequence belongs to the bacterial ribosomal protein bS6 family.

In terms of biological role, binds together with bS18 to 16S ribosomal RNA. This chain is Small ribosomal subunit protein bS6, found in Nitrosomonas eutropha (strain DSM 101675 / C91 / Nm57).